We begin with the raw amino-acid sequence, 132 residues long: Small ribosomal subunit protein eS12 (132 aa).

This sequence belongs to the eukaryotic ribosomal protein eS12 family.

It localises to the cytoplasm. The sequence is that of Small ribosomal subunit protein eS12 (rps12) from Xenopus laevis (African clawed frog).